The primary structure comprises 111 residues: uncharacterized protein (111 aa).

This is an uncharacterized protein from Streptomyces coelicolor (strain ATCC BAA-471 / A3(2) / M145).